Reading from the N-terminus, the 307-residue chain is UDP-N-acetylenolpyruvoylglucosamine reductase (307 aa).

An FAD-binding PCMH-type domain is found at 21–183; sequence RVGGPADLFF…TEVVMEGPPG (163 aa). Residue Arg-163 is part of the active site. A compositionally biased stretch (basic and acidic residues) spans 200–209; sequence EATQPTKDRT. The interval 200-227 is disordered; it reads EATQPTKDRTAGSTFRNPAGFSSTGRAD. The segment covering 210-224 has biased composition (polar residues); it reads AGSTFRNPAGFSSTG. Ser-212 acts as the Proton donor in catalysis. Glu-294 is an active-site residue.

This sequence belongs to the MurB family. FAD serves as cofactor.

The protein localises to the cytoplasm. The enzyme catalyses UDP-N-acetyl-alpha-D-muramate + NADP(+) = UDP-N-acetyl-3-O-(1-carboxyvinyl)-alpha-D-glucosamine + NADPH + H(+). The protein operates within cell wall biogenesis; peptidoglycan biosynthesis. Functionally, cell wall formation. This Dinoroseobacter shibae (strain DSM 16493 / NCIMB 14021 / DFL 12) protein is UDP-N-acetylenolpyruvoylglucosamine reductase.